Here is a 272-residue protein sequence, read N- to C-terminus: 3-methyl-2-oxobutanoate hydroxymethyltransferase (272 aa).

Positions 43 and 82 each coordinate Mg(2+). Residues 43–44 (DS), aspartate 82, and lysine 112 contribute to the 3-methyl-2-oxobutanoate site. Glutamate 114 is a Mg(2+) binding site. Glutamate 179 functions as the Proton acceptor in the catalytic mechanism.

It belongs to the PanB family. As to quaternary structure, homodecamer; pentamer of dimers. The cofactor is Mg(2+).

The protein localises to the cytoplasm. It catalyses the reaction 3-methyl-2-oxobutanoate + (6R)-5,10-methylene-5,6,7,8-tetrahydrofolate + H2O = 2-dehydropantoate + (6S)-5,6,7,8-tetrahydrofolate. The protein operates within cofactor biosynthesis; (R)-pantothenate biosynthesis; (R)-pantoate from 3-methyl-2-oxobutanoate: step 1/2. In terms of biological role, catalyzes the reversible reaction in which hydroxymethyl group from 5,10-methylenetetrahydrofolate is transferred onto alpha-ketoisovalerate to form ketopantoate. This is 3-methyl-2-oxobutanoate hydroxymethyltransferase from Staphylococcus aureus (strain COL).